Here is a 388-residue protein sequence, read N- to C-terminus: Chorismate synthase (388 aa).

NADP(+) contacts are provided by Arg-39 and Arg-45. FMN contacts are provided by residues 130-132 (RSS), 251-252 (NA), Gly-296, 311-315 (KPIPT), and Arg-337.

Belongs to the chorismate synthase family. As to quaternary structure, homotetramer. Requires FMNH2 as cofactor.

The catalysed reaction is 5-O-(1-carboxyvinyl)-3-phosphoshikimate = chorismate + phosphate. It participates in metabolic intermediate biosynthesis; chorismate biosynthesis; chorismate from D-erythrose 4-phosphate and phosphoenolpyruvate: step 7/7. Catalyzes the anti-1,4-elimination of the C-3 phosphate and the C-6 proR hydrogen from 5-enolpyruvylshikimate-3-phosphate (EPSP) to yield chorismate, which is the branch point compound that serves as the starting substrate for the three terminal pathways of aromatic amino acid biosynthesis. This reaction introduces a second double bond into the aromatic ring system. This Streptococcus pyogenes serotype M3 (strain SSI-1) protein is Chorismate synthase.